The sequence spans 175 residues: Large ribosomal subunit protein uL16 (175 aa).

The protein belongs to the universal ribosomal protein uL16 family.

The sequence is that of Large ribosomal subunit protein uL16 from Caldivirga maquilingensis (strain ATCC 700844 / DSM 13496 / JCM 10307 / IC-167).